The following is a 220-amino-acid chain: N-(5'-phosphoribosyl)anthranilate isomerase (220 aa).

The protein belongs to the TrpF family.

The enzyme catalyses N-(5-phospho-beta-D-ribosyl)anthranilate = 1-(2-carboxyphenylamino)-1-deoxy-D-ribulose 5-phosphate. Its pathway is amino-acid biosynthesis; L-tryptophan biosynthesis; L-tryptophan from chorismate: step 3/5. In Xylella fastidiosa (strain 9a5c), this protein is N-(5'-phosphoribosyl)anthranilate isomerase.